Here is a 302-residue protein sequence, read N- to C-terminus: Protein ECM11 (302 aa).

2 disordered regions span residues 1 to 67 (MTVI…TDKQ) and 162 to 187 (SLNG…GSYQ). Residues 35–46 (NKPPSSINSRSG) show a composition bias toward polar residues. The segment covering 56 to 67 (APEKKINNTDKQ) has biased composition (basic and acidic residues). Positions 162–171 (SLNGENTSSP) are enriched in polar residues.

Interacts with CDC6.

Its subcellular location is the nucleus. May be involved in cell wall organization and biogenesis. This is Protein ECM11 (ECM11) from Saccharomyces cerevisiae (strain ATCC 204508 / S288c) (Baker's yeast).